The following is a 969-amino-acid chain: ATP-dependent RNA helicase DBP10 (969 aa).

Disordered stretches follow at residues 1–73 and 78–97; these read MVKN…KVED and SLEL…DDDD. The span at 32 to 59 shows a compositional bias: acidic residues; it reads SDSESDDSSDGSDEEVQDVIEYSSDEEE. The short motif at 115–143 is the Q motif element; the sequence is GSFASFGLSKLILVNISKRGFRQPTPIQR. Positions 146–318 constitute a Helicase ATP-binding domain; that stretch reads IPLILQNRDI…KAGLVNPVLV (173 aa). Residue 159–166 participates in ATP binding; the sequence is ARTGSGKT. The short motif at 266–269 is the DEAD box element; sequence DEAD. Disordered regions lie at residues 366–402, 860–924, and 946–969; these read QLND…PKAN, KTGA…LERG, and IRKD…KRKF. Residues 374-383 show a composition bias toward acidic residues; sequence DSDESAEEDE. The span at 386–398 shows a compositional bias: basic residues; sequence KRRKRKSFNRKAM. Residues 396-543 form the Helicase C-terminal domain; sequence KAMPKANELP…PMYEALERLS (148 aa). The segment covering 897 to 921 has biased composition (basic and acidic residues); sequence EKAPRLPDKKRDDYHKQKKKVESAL. The segment covering 958–969 has biased composition (basic residues); sequence AKNARPSKKRKF.

The protein belongs to the DEAD box helicase family. DDX54/DBP10 subfamily.

The protein localises to the nucleus. Its subcellular location is the nucleolus. The catalysed reaction is ATP + H2O = ADP + phosphate + H(+). Its function is as follows. ATP-binding RNA helicase involved in the biogenesis of 60S ribosomal subunits and is required for the normal formation of 25S and 5.8S rRNAs. The protein is ATP-dependent RNA helicase DBP10 (DBP10) of Candida glabrata (strain ATCC 2001 / BCRC 20586 / JCM 3761 / NBRC 0622 / NRRL Y-65 / CBS 138) (Yeast).